We begin with the raw amino-acid sequence, 194 residues long: Fe/S biogenesis protein NfuA (194 aa).

[4Fe-4S] cluster-binding residues include cysteine 152 and cysteine 155.

The protein belongs to the NfuA family. As to quaternary structure, homodimer. [4Fe-4S] cluster is required as a cofactor.

Its function is as follows. Involved in iron-sulfur cluster biogenesis. Binds a 4Fe-4S cluster, can transfer this cluster to apoproteins, and thereby intervenes in the maturation of Fe/S proteins. Could also act as a scaffold/chaperone for damaged Fe/S proteins. This Pseudomonas entomophila (strain L48) protein is Fe/S biogenesis protein NfuA.